The sequence spans 120 residues: Glycine cleavage system H protein (120 aa).

The Lipoyl-binding domain occupies valine 17–lysine 99. Residue lysine 58 is modified to N6-lipoyllysine.

This sequence belongs to the GcvH family. As to quaternary structure, the glycine cleavage system is composed of four proteins: P, T, L and H. It depends on (R)-lipoate as a cofactor.

In terms of biological role, the glycine cleavage system catalyzes the degradation of glycine. The H protein shuttles the methylamine group of glycine from the P protein to the T protein. The polypeptide is Glycine cleavage system H protein (Methylorubrum populi (strain ATCC BAA-705 / NCIMB 13946 / BJ001) (Methylobacterium populi)).